Reading from the N-terminus, the 199-residue chain is RNA-free ribonuclease P (199 aa).

The protein belongs to the HARP family.

The catalysed reaction is Endonucleolytic cleavage of RNA, removing 5'-extranucleotides from tRNA precursor.. Its function is as follows. RNA-free RNase P that catalyzes the removal of the 5'-leader sequence from pre-tRNA to produce the mature 5'-terminus. The protein is RNA-free ribonuclease P of Thermococcus onnurineus (strain NA1).